We begin with the raw amino-acid sequence, 157 residues long: Phosphopantetheine adenylyltransferase (157 aa).

T8 serves as a coordination point for substrate. ATP is bound by residues 8-9 (TF) and H16. K40, T72, and R86 together coordinate substrate. Residues 87 to 89 (GLR), E97, and 122 to 128 (YSFLSSS) each bind ATP.

Belongs to the bacterial CoaD family. In terms of assembly, homohexamer. Mg(2+) is required as a cofactor.

It localises to the cytoplasm. It carries out the reaction (R)-4'-phosphopantetheine + ATP + H(+) = 3'-dephospho-CoA + diphosphate. The protein operates within cofactor biosynthesis; coenzyme A biosynthesis; CoA from (R)-pantothenate: step 4/5. Reversibly transfers an adenylyl group from ATP to 4'-phosphopantetheine, yielding dephospho-CoA (dPCoA) and pyrophosphate. This Prochlorococcus marinus (strain MIT 9301) protein is Phosphopantetheine adenylyltransferase.